The chain runs to 526 residues: MLO-like protein 1 (526 aa).

The Extracellular segment spans residues 1-11; sequence MGHGGEGMSLE. Residues 12-32 traverse the membrane as a helical segment; it reads FTPTWVVAGVCTVIVAISLAV. The Cytoplasmic portion of the chain corresponds to 33–61; that stretch reads ERLLHYFGTVLKKKKQKPLYEALQKVKEE. The helical transmembrane segment at 62 to 82 threads the bilayer; that stretch reads LMLLGFISLLLTVFQGLISKF. The Extracellular segment spans residues 83-160; it reads CVKENVLMHM…LSLEALHHLH (78 aa). Residues 161–181 form a helical membrane-spanning segment; it reads IFIFVLAISHVTFCVLTVIFG. Topologically, residues 182-287 are cytoplasmic; sequence STRIHQWKKW…MRALEDDFKQ (106 aa). 2 helical membrane-spanning segments follow: residues 288 to 308 and 309 to 329; these read VVGI…LNVN and GWHT…AVGT. Over 330 to 372 the chain is Cytoplasmic; the sequence is KLEHVIAQLAHEVAEKHVAIEGDLVVKPSDEHFWFSKPQIVLY. The chain crosses the membrane as a helical span at residues 373–393; it reads LIHFILFQNAFEIAFFFWIWV. Topologically, residues 394-412 are extracellular; it reads TYGFDSCIMGQVRYIVPRL. Residues 413-433 form a helical membrane-spanning segment; sequence VIGVFIQVLCSYSTLPLYAIV. Residues 434–526 are Cytoplasmic-facing; it reads SQMGSSFKKA…NNEITPDHNN (93 aa). The interval 447–468 is calmodulin-binding; it reads ENVQVGLVGWAQKVKQKRDLKA. The tract at residues 471 to 526 is disordered; that stretch reads SNGDEGSSQAGPGPDSGSGSAPAAGPGAGFAGIQLSRVTRNNAGDTNNEITPDHNN. Low complexity predominate over residues 476 to 495; the sequence is GSSQAGPGPDSGSGSAPAAG. Over residues 506–520 the composition is skewed to polar residues; it reads SRVTRNNAGDTNNEI.

It belongs to the MLO family.

It localises to the cell membrane. In terms of biological role, may be involved in modulation of pathogen defense and leaf cell death. Activity seems to be regulated by Ca(2+)-dependent calmodulin binding and seems not to require heterotrimeric G proteins. This Arabidopsis thaliana (Mouse-ear cress) protein is MLO-like protein 1 (MLO1).